We begin with the raw amino-acid sequence, 313 residues long: Phosphate import ATP-binding protein PstB 2 (313 aa).

Residues 1–33 (MSDSINTEPSTDTQTNGERTVETTSPSAETTAG) are compositionally biased toward polar residues. The segment at 1–40 (MSDSINTEPSTDTQTNGERTVETTSPSAETTAGESEEQVR) is disordered. In terms of domain architecture, ABC transporter spans 54–308 (LSVENLDVWY…PESQRVEDYI (255 aa)). 86-93 (GPSGCGKS) provides a ligand contact to ATP.

This sequence belongs to the ABC transporter superfamily. Phosphate importer (TC 3.A.1.7) family. As to quaternary structure, the complex is composed of two ATP-binding proteins (PstB), two transmembrane proteins (PstC and PstA) and a solute-binding protein (PstS).

Its subcellular location is the cell membrane. The enzyme catalyses phosphate(out) + ATP + H2O = ADP + 2 phosphate(in) + H(+). Part of the ABC transporter complex PstSACB involved in phosphate import. Responsible for energy coupling to the transport system. This is Phosphate import ATP-binding protein PstB 2 from Haloarcula marismortui (strain ATCC 43049 / DSM 3752 / JCM 8966 / VKM B-1809) (Halobacterium marismortui).